The sequence spans 3354 residues: MGRHVATSCHVAWLLVLISGCWGQVNRLPFFTNHFFDTYLLISEDTPVGSSVTQLLAQDMDNDPLVFGVSGEEASRFFAVEPDTGVVWLRQPLDRETKSEFTVEFSVSDHQGVITRKVNIQVGDVNDNAPTFHNQPYSVRIPENTPVGTPIFIVNATDPDLGAGGSVLYSFQPPSQFFAIDSARGIVTVIRELDYETTQAYQLTVNATDQDKTRPLSTLANLAIIITDVQDMDPIFINLPYSTNIYEHSPPGTTVRIITAIDQDKGRPRGIGYTIVSGNTNSIFALDYISGVLTLNGLLDRENPLYSHGFILTVKGTELNDDRTPSDATVTTTFNILVIDINDNAPEFNSSEYSVAITELAQVGFALPLFIQVVDKDENLGLNSMFEVYLVGNNSHHFIISPTSVQGKADIRIRVAIPLDYETVDRYDFDLFANESVPDHVGYAKVKITLINENDNRPIFSQPLYNISLYENVTVGTSVLTVLATDNDAGTFGEVSYFFSDDPDRFSLDKDTGLIMLIARLDYELIQRFTLTIIARDGGGEETTGRVRINVLDVNDNVPTFQKDAYVGALRENEPSVTQLVRLRATDEDSPPNNQITYSIVSASAFGSYFDISLYEGYGVISVSRPLDYEQISNGLIYLTVMAMDAGNPPLNSTVPVTIEVFDENDNPPTFSKPAYFVSVVENIMAGATVLFLNATDLDRSREYGQESIIYSLEGSTQFRINARSGEITTTSLLDRETKSEYILIVRAVDGGVGHNQKTGIATVNITLLDINDNHPTWKDAPYYINLVEMTPPDSDVTTVVAVDPDLGENGTLVYSIQPPNKFYSLNSTTGKIRTTHAMLDRENPDPHEAELMRKIVVSVTDCGRPPLKATSSATVFVNLLDLNDNDPTFQNLPFVAEVLEGIPAGVSIYQVVAIDLDEGLNGLVSYRMPVGMPRMDFLINSSSGVVVTTTELDRERIAEYQLRVVASDAGTPTKSSTSTLTIHVLDVNDETPTFFPAVYNVSVSEDVPREFRVVWLNCTDNDVGLNAELSYFITGGNVDGKFSVGYRDAVVRTVVGLDRETTAAYMLILEAIDNGPVGKRHTGTATVFVTVLDVNDNRPIFLQSSYEASVPEDIPEGHSILQLKATDADEGEFGRVWYRILHGNHGNNFRIHVSNGLLMRGPRPLDRERNSSHVLIVEAYNHDLGPMRSSVRVIVYVEDINDEAPVFTQQQYSRLGLRETAGIGTSVIVVQATDRDSGDGGLVNYRILSGAEGKFEIDESTGLIITVNYLDYETKTSYMMNVSATDQAPPFNQGFCSVYITLLNELDEAVQFSNASYEAAILENLALGTEIVRVQAYSIDNLNQITYRFNAYTSTQAKALFKIDAITGVITVQGLVDREKGDFYTLTVVADDGGPKVDSTVKVYITVLDENDNSPRFDFTSDSAVSIPEDCPVGQRVATVKAWDPDAGSNGQVVFSLASGNIAGAFEIVTTNDSIGEVFVARPLDREELDHYILQVVASDRGTPPRKKDHILQVTILDINDNPPVIESPFGYNVSVNENVGGGTAVVQVRATDRDIGINSVLSYYITEGNKDMAFRMDRISGEIATRPAPPDRERQSFYHLVATVEDEGTPTLSATTHVYVTIVDENDNAPMFQQPHYEVLLDEGPDTLNTSLITIQALDLDEGPNGTVTYAIVAGNIVNTFRIDRHMGVITAAKELDYEISHGRYTLIVTATDQCPILSHRLTSTTTVLVNVNDINDNVPTFPRDYEGPFEVTEGQPGPRVWTFLAHDRDSGPNGQVEYSIMDGDPLGEFVISPVEGVLRVRKDVELDRETIAFYNLTICARDRGMPPLSSTMLVGIRVLDINDNDPVLLNLPMNITISENSPVSSFVAHVLASDADSGCNARLTFNITAGNRERAFFINATTGIVTVNRPLDRERIPEYKLTISVKDNPENPRIARRDYDLLLIFLSDENDNHPLFTKSTYQAEVMENSPAGTPLTVLNGPILALDADQDIYAVVTYQLLGAQSGLFDINSSTGVVTVRSGVIIDREAFSPPILELLLLAEDIGLLNSTAHLLITILDDNDNRPTFSPATLTVHLLENCPPGFSVLQVTATDEDSGLNGELVYRIEAGAQDRFLIHLVTGVIRVGNATIDREEQESYRLTVVATDRGTVPLSGTAIVTILIDDINDSRPEFLNPIQTVSVLESAEPGTVIANITAIDHDLNPKLEYHIVGIVAKDDTDRLVPNQEDAFAVNINTGSVMVKSPMNRELVATYEVTLSVIDNASDLPERSVSVPNAKLTVNVLDVNDNTPQFKPFGITYYMERILEGATPGTTLIAVAAVDPDKGLNGLVTYTLLDLVPPGYVQLEDSSAGKVIANRTVDYEEVHWLNFTVRASDNGSPPRAAEIPVYLEIVDINDNNPIFDQPSYQEAVFEDVPVGTIILTVTATDADSGNFALIEYSLGDGESKFAINPTTGDIYVLSSLDREKKDHYILTALAKDNPGDVASNRRENSVQVVIQVLDVNDCRPQFSKPQFSTSVYENEPAGTSVITMMATDQDEGPNGELTYSLEGPGVEAFHVDMDSGLVTTQRPLQSYEKFSLTVVATDGGEPPLWGTTMLLVEVIDVNDNRPVFVRPPNGTILHIREEIPLRSNVYEVYATDKDEGLNGAVRYSFLKTAGNRDWEFFIIDPISGLIQTAQRLDRESQAVYSLILVASDLGQPVPYETMQPLQVALEDIDDNEPLFVRPPKGSPQYQLLTVPEHSPRGTLVGNVTGAVDADEGPNAIVYYFIAAGNEEKNFHLQPDGCLLVLRDLDREREAIFSFIVKASSNRSWTPPRGPSPTLDLVADLTLQEVRVVLEDINDQPPRFTKAEYTAGVATDAKVGSELIQVLALDADIGNNSLVFYSILAIHYFRALANDSEDVGQVFTMGSMDGILRTFDLFMAYSPGYFVVDIVARDLAGHNDTAIIGIYILRDDQRVKIVINEIPDRVRGFEEEFIHLLSNITGAIVNTDNVQFHVDKKGRVNFAQTELLIHVVNRDTNRILDVDRVIQMIDENKEQLRNLFRNYNVLDVQPAISVRLPDDMSALQMAIIVLAILLFLAAMLFVLMNWYYRTVHKRKLKAIVAGSAGNRGFIDIMDMPNTNKYSFDGANPVWLDPFCRNLELAAQAEHEDDLPENLSEIADLWNSPTRTHGTFGREPAAVKPDDDRYLRAAIQEYDNIAKLGQIIREGPIKGSLLKVVLEDYLRLKKLFAQRMVQKASSCHSSISELIQTELDEEPGDHSPGQGSLRFRHKPPVELKGPDGIHVVHGSTGTLLATDLNSLPEEDQKGLGRSLETLTAAEATAFERNARTESAKSTPLHKLRDVIMETPLEITEL.

An N-terminal signal peptide occupies residues 1–23; sequence MGRHVATSCHVAWLLVLISGCWG. Over 24–3064 the chain is Extracellular; the sequence is QVNRLPFFTN…SVRLPDDMSA (3041 aa). Cadherin domains follow at residues 34 to 132, 133 to 236, 237 to 348, 349 to 460, 461 to 561, 562 to 671, 672 to 784, 779 to 890, 891 to 995, 996 to 1102, 1103 to 1208, 1210 to 1313, 1314 to 1418, 1420 to 1527, 1529 to 1634, 1635 to 1744, 1745 to 1851, 1852 to 1959, 1960 to 2069, 2070 to 2174, 2175 to 2293, 2297 to 2402, 2403 to 2509, 2510 to 2611, 2614 to 2722, 2729 to 2846, and 2847 to 2975; these read HFFD…APTF, HNQP…DPIF, INLP…APEF, NSSE…RPIF, SQPL…VPTF, QKDA…PPTF, SKPA…APYY, KDAP…DPTF, QNLP…TPTF, FPAV…RPIF, LQSS…APVF, QQQY…AVQF, SNAS…SPRF, FTSD…PPVI, SPFG…APMF, QQPH…VPTF, PRDY…DPVL, LNLP…HPLF, TKST…RPTF, SPAT…RPEF, LNPI…TPQF, GITY…NPIF, DQPS…RPQF, SKPQ…RPVF, PPNG…EPLF, SPQY…PPRF, and TKAE…EEEF. Residues Asn-155 and Asn-206 are each glycosylated (N-linked (GlcNAc...) asparagine). Residues Asn-349, Asn-393, Asn-434, Asn-466, Asn-472, Asn-652, Asn-694, Asn-765, Asn-810, Asn-827, Asn-941, Asn-1001, Asn-1018, Asn-1171, Asn-1282, Asn-1315, Asn-1473, Asn-1534, Asn-1651, Asn-1667, Asn-1818, Asn-1857, Asn-1889, Asn-1902, Asn-2013, Asn-2050, Asn-2129, Asn-2168, Asn-2195, Asn-2263, Asn-2357, and Asn-2369 are each glycosylated (N-linked (GlcNAc...) asparagine). Asn-2616, Asn-2749, Asn-2808, Asn-2877, Asn-2896, Asn-2941, and Asn-2981 each carry an N-linked (GlcNAc...) asparagine glycan. Residues 3065–3085 form a helical membrane-spanning segment; the sequence is LQMAIIVLAILLFLAAMLFVL. The Cytoplasmic segment spans residues 3086-3354; the sequence is MNWYYRTVHK…METPLEITEL (269 aa).

As to quaternary structure, antiparallel heterodimer with PCDH15. Interacts with USH1C and USH1G. Particularly strong expression in the retina. Found also in the cochlea.

The protein resides in the cell membrane. In terms of biological role, cadherins are calcium-dependent cell adhesion proteins. They preferentially interact with themselves in a homophilic manner in connecting cells. CDH23 is required for establishing and/or maintaining the proper organization of the stereocilia bundle of hair cells in the cochlea and the vestibule during late embryonic/early postnatal development. It is part of the functional network formed by USH1C, USH1G, CDH23 and MYO7A that mediates mechanotransduction in cochlear hair cells. Required for normal hearing. In Homo sapiens (Human), this protein is Cadherin-23.